A 36-amino-acid chain; its full sequence is Endoglucanase Cel12A (36 aa).

Belongs to the glycosyl hydrolase 12 (cellulase H) family.

The protein localises to the secreted. It is found in the extracellular space. It catalyses the reaction Endohydrolysis of (1-&gt;4)-beta-D-glucosidic linkages in cellulose, lichenin and cereal beta-D-glucans.. Functionally, has carboxymethylcellulase activity. The chain is Endoglucanase Cel12A from Gloeophyllum trabeum (Brown rot fungus).